A 323-amino-acid polypeptide reads, in one-letter code: tRNA U34 carboxymethyltransferase (323 aa).

Carboxy-S-adenosyl-L-methionine is bound by residues Lys91, Trp105, Lys110, Gly130, 152–154 (DPT), 181–182 (IE), Met196, Tyr200, and Arg315.

Belongs to the class I-like SAM-binding methyltransferase superfamily. CmoB family. As to quaternary structure, homotetramer.

It catalyses the reaction carboxy-S-adenosyl-L-methionine + 5-hydroxyuridine(34) in tRNA = 5-carboxymethoxyuridine(34) in tRNA + S-adenosyl-L-homocysteine + H(+). Its function is as follows. Catalyzes carboxymethyl transfer from carboxy-S-adenosyl-L-methionine (Cx-SAM) to 5-hydroxyuridine (ho5U) to form 5-carboxymethoxyuridine (cmo5U) at position 34 in tRNAs. This chain is tRNA U34 carboxymethyltransferase, found in Salmonella arizonae (strain ATCC BAA-731 / CDC346-86 / RSK2980).